We begin with the raw amino-acid sequence, 105 residues long: Nucleoid-associated protein SE_2306 (105 aa).

The interval Met-1–Gly-40 is disordered. Residues Met-7 to Lys-16 are compositionally biased toward low complexity. Over residues Met-21 to Val-33 the composition is skewed to basic and acidic residues.

The protein belongs to the YbaB/EbfC family. As to quaternary structure, homodimer.

The protein resides in the cytoplasm. The protein localises to the nucleoid. Binds to DNA and alters its conformation. May be involved in regulation of gene expression, nucleoid organization and DNA protection. The sequence is that of Nucleoid-associated protein SE_2306 from Staphylococcus epidermidis (strain ATCC 12228 / FDA PCI 1200).